A 202-amino-acid chain; its full sequence is Imidazoleglycerol-phosphate dehydratase (202 aa).

The protein belongs to the imidazoleglycerol-phosphate dehydratase family.

It localises to the cytoplasm. The enzyme catalyses D-erythro-1-(imidazol-4-yl)glycerol 3-phosphate = 3-(imidazol-4-yl)-2-oxopropyl phosphate + H2O. Its pathway is amino-acid biosynthesis; L-histidine biosynthesis; L-histidine from 5-phospho-alpha-D-ribose 1-diphosphate: step 6/9. The chain is Imidazoleglycerol-phosphate dehydratase from Lactococcus lactis subsp. cremoris (strain SK11).